We begin with the raw amino-acid sequence, 1349 residues long: Adhesion G protein-coupled receptor F5 (1349 aa).

A signal peptide spans 1–24 (MKSSRTVTLYFVLIVICSSEATWS). Residues 25-1016 (RPAEPIVHPL…PGSLLKILLD (992 aa)) are Extracellular-facing. N-linked (GlcNAc...) asparagine glycans are attached at residues N73, N94, N185, N254, N270, N286, N299, N326, N337, N349, N396, N470, N503, N538, N649, and N666. The SEA domain maps to 163 to 271 (PETYITLKIK…NSFQGTPSNE (109 aa)). Ig-like domains are found at residues 268-366 (PSNE…LDVT), 367-464 (PIRI…IAVT), and 469-559 (ANLT…KDVT). C291 and C348 are oxidised to a cystine. A disulfide bridge links C389 with C447. C490 and C543 are joined by a disulfide. S819 carries the post-translational modification Phosphoserine. N-linked (GlcNAc...) asparagine glycosylation is found at N820, N958, and N963. Residues 842–1006 (TPPFLFHPNV…SILMSPDSPD (165 aa)) form the GAIN-B domain. 2 disulfide bridges follow: C954/C988 and C973/C990. The tract at residues 954-1006 (CVFWNFSLANNTGGWDSSGCTVEDDGRDNRDRVFCKCNHLTSFSILMSPDSPD) is GPS. The tethered agonist stretch occupies residues 994-1009 (TSFSILMSPDSPDPGS). A helical membrane pass occupies residues 1017–1036 (IISYIGLGFSIVSLAACLVV). At 1037–1055 (EAMVWKSVTKNRTSYMRHI) the chain is on the cytoplasmic side. Residues 1056 to 1078 (CIVNIALCLLIADIWFIVAGAIH) form a helical membrane-spanning segment. The Extracellular portion of the chain corresponds to 1079 to 1097 (DGHYPLNETACVAATFFIH). An N-linked (GlcNAc...) asparagine glycan is attached at N1085. A helical membrane pass occupies residues 1098–1120 (FFYLSVFFWMLTLGLMLFYRLIF). At 1121-1131 (ILHDASKSTQK) the chain is on the cytoplasmic side. A helical membrane pass occupies residues 1132–1154 (AIAFSLGYGCPLIISSITVGVTQ). At 1155–1173 (PQEVYMRKNACWLNWEDTR) the chain is on the extracellular side. The helical transmembrane segment at 1174–1196 (ALLAFAIPALIIVVVNVSITVVV) threads the bilayer. The Cytoplasmic portion of the chain corresponds to 1197 to 1216 (ITKILRPSVGDKPGKQEKSS). The chain crosses the membrane as a helical span at residues 1217 to 1239 (LFQISKSIGVLTPLLGLTWGFGL). Over 1240-1248 (ATVIQGSNA) the chain is Extracellular. The helical transmembrane segment at 1249 to 1271 (VFHIIFTLLNAFQGLFILLFGCL) threads the bilayer. Topologically, residues 1272-1349 (WDQKVQEALL…NSSSAYSLLN (78 aa)) are cytoplasmic. T1303 carries the phosphothreonine modification. At S1310 the chain carries Phosphoserine. Low complexity predominate over residues 1329–1343 (STPETTSSSVENSSS). Residues 1329 to 1349 (STPETTSSSVENSSSAYSLLN) are disordered.

Belongs to the G-protein coupled receptor 2 family. Adhesion G-protein coupled receptor (ADGR) subfamily. Homodimer; disulfide-linked. Heterodimer of 2 chains generated by proteolytic processing; the large extracellular N-terminal fragment and the membrane-bound C-terminal fragment predominantly remain associated and non-covalently linked. Fragment generates by the processing enzyme furin remains attached to the extracellular N-terminal fragment. Interacts (via N-terminal extracellular domain) with SFTPD. Post-translationally, highly glycosylated. Proteolytically cleaved at multiple sites: one in the GPS region of the GAIN-B domain (S1 site) and the other in the SEA domain (S2 site). The proteolytic cleavage at S1 site generates an extracellular subunit and a seven-transmembrane subunit. The proteolytic cleavage at S2 site generates a fragment that undergoes proteolytic cleavage by the processing enzyme furin. As to expression, highly expressed in the lung and to a much lesser extent in the kidney and heart. Dense localization in alveolar walls of the lung and in the intercalated cells of the collecting duct of the kidney.

The protein resides in the cell membrane. With respect to regulation, as an adhesion G protein-coupled receptor (aGPCR) exhibits a large N-terminal extracellular domain containing highly conserved GPCR autoproteolysis-inducing (GAIN) domain. During synthesis, intracellular autoproteolytic processing of nascent chain within the GAIN domain generates a mature protein, consisting of an N-terminal fragment that is non-covalently linked to the C-terminal fragment. The mature protein is routed to the plasma membrane where the N- and C-terminal fragments remain associated, forming the holoreceptor. Dissociation of the aGPCR fragments stimulates G protein signaling through the action of the tethered-peptide agonist stalk that is occluded within the GAIN domain in the holoreceptor form. This dissociation might be induced by ligand binding, such as that of sFNDC4. Receptor that plays a critical role in lung surfactant homeostasis. May play a role in controlling adipocyte function. Its function is as follows. Adhesion G protein-coupled receptor. In alveolar type II (ATII or AT2) cells, required for normal lung surfactant homeostasis. Modulation of both surfactant secretion and uptake by ATII cells is mediated by the downstream activation of GNAQ/GNA11 proteins and may be a consequence of increased cortical F-actin assembly induced by ADGRF5 activation. In the kidney, may play a role in the regulation of acid excretion into the primary urine, possibly by regulating the surface expression of V-ATPase proton pump. As a receptor for soluble FNDC4 (sFNDC4), required for proper systemic glucose tolerance, specifically sensitizing white adipose tissue to insulin. Also plays a role in sFNDC4-induced decrease of local inflammation in white adipose tissue. This Rattus norvegicus (Rat) protein is Adhesion G protein-coupled receptor F5 (Adgrf5).